The following is a 172-amino-acid chain: MVKFLLLALALGVSCAQHQNLEVSPSEVDGKWHSLYIAADNKSKVSEGGPLRVYVKHLECSDECQTFTIKFYTKVENVCQEHRVVGRKGKDGKYITDFSGQNYFHVVEKADDTMTFHNVNVDDSGKTNVILVVGKGESSSIEQKQRFEKTAEKYDIPKENIEHLVTTDTCNQ.

The N-terminal stretch at 1 to 15 (MVKFLLLALALGVSC) is a signal peptide. Asn-41 carries N-linked (GlcNAc...) asparagine glycosylation. 2 cysteine pairs are disulfide-bonded: Cys-60–Cys-64 and Cys-79–Cys-170.

It belongs to the calycin superfamily. Lipocalin family. N-glycosylated. In terms of tissue distribution, expressed in acinar cells of the submandibular salivary gland from where it is secreted into saliva (at protein level). Also released from the submandibular salivary gland into blood and excreted in urine (at protein level). Expressed in the lacrimal gland from where it is secreted into tears (at protein level).

The protein localises to the secreted. Its subcellular location is the cytoplasm. This chain is Male-specific submandibular salivary gland protein, found in Mesocricetus auratus (Golden hamster).